A 294-amino-acid chain; its full sequence is Probable 2-(5''-triphosphoribosyl)-3'-dephosphocoenzyme-A synthase (294 aa).

It belongs to the CitG/MdcB family.

The catalysed reaction is 3'-dephospho-CoA + ATP = 2'-(5''-triphospho-alpha-D-ribosyl)-3'-dephospho-CoA + adenine. The protein is Probable 2-(5''-triphosphoribosyl)-3'-dephosphocoenzyme-A synthase of Streptococcus equi subsp. zooepidemicus (strain H70).